The primary structure comprises 346 residues: MEKEATPQQQPPVVDPARLKQLNLAIETLEKQFGKGAIMRLGDDSAVMHVQVISTGSMALDYALGVGGLPRGRVTEIYGPESSGKTTLALHAIAEAQKNGGIAALVDAEHAFDPTYARKLGVDINALLVSQPESGEQALSIVETLVRSGAVDIIVIDSVAALVPQAELEGEMGDSVVGLQARLMSQALRKLTGAISKSSSVCLFINQLRDKIGVMYGSPETTTGGKALKFYSSVRLDIRKIAQIKDGEELVGNRTKVKVVKNKVAPPFKTAEFDILYGEGISVLGELIDLAVEFGIIKKSGAWFSYGTEKLGQGRENVKKLLKEDETLRNTIRQQVRDMLTGAPTA.

79-86 (GPESSGKT) lines the ATP pocket.

This sequence belongs to the RecA family.

It is found in the cytoplasm. Its function is as follows. Can catalyze the hydrolysis of ATP in the presence of single-stranded DNA, the ATP-dependent uptake of single-stranded DNA by duplex DNA, and the ATP-dependent hybridization of homologous single-stranded DNAs. It interacts with LexA causing its activation and leading to its autocatalytic cleavage. The sequence is that of Protein RecA from Chlorobaculum tepidum (strain ATCC 49652 / DSM 12025 / NBRC 103806 / TLS) (Chlorobium tepidum).